The sequence spans 248 residues: tRNA (guanine-N(1)-)-methyltransferase (248 aa).

S-adenosyl-L-methionine is bound by residues G113 and I133–L138.

It belongs to the RNA methyltransferase TrmD family. As to quaternary structure, homodimer.

The protein localises to the cytoplasm. The enzyme catalyses guanosine(37) in tRNA + S-adenosyl-L-methionine = N(1)-methylguanosine(37) in tRNA + S-adenosyl-L-homocysteine + H(+). Functionally, specifically methylates guanosine-37 in various tRNAs. This Shewanella frigidimarina (strain NCIMB 400) protein is tRNA (guanine-N(1)-)-methyltransferase.